A 603-amino-acid chain; its full sequence is Elongation factor 4 (603 aa).

One can recognise a tr-type G domain in the interval 6–188 (SKIRNFCIIA…QIVKKIPAPT (183 aa)). GTP contacts are provided by residues 18 to 23 (DHGKST) and 135 to 138 (NKVD).

It belongs to the TRAFAC class translation factor GTPase superfamily. Classic translation factor GTPase family. LepA subfamily.

It localises to the cell membrane. The enzyme catalyses GTP + H2O = GDP + phosphate + H(+). Required for accurate and efficient protein synthesis under certain stress conditions. May act as a fidelity factor of the translation reaction, by catalyzing a one-codon backward translocation of tRNAs on improperly translocated ribosomes. Back-translocation proceeds from a post-translocation (POST) complex to a pre-translocation (PRE) complex, thus giving elongation factor G a second chance to translocate the tRNAs correctly. Binds to ribosomes in a GTP-dependent manner. In Agathobacter rectalis (strain ATCC 33656 / DSM 3377 / JCM 17463 / KCTC 5835 / VPI 0990) (Eubacterium rectale), this protein is Elongation factor 4.